Reading from the N-terminus, the 565-residue chain is NAD-dependent malic enzyme (565 aa).

Residue Y103 is the Proton donor of the active site. K177 acts as the Proton acceptor in catalysis. 3 residues coordinate a divalent metal cation: E248, D249, and D272. NAD(+) is bound by residues D272 and N419. S445 is subject to Phosphoserine.

It belongs to the malic enzymes family. It depends on Mg(2+) as a cofactor. Requires Mn(2+) as cofactor.

It catalyses the reaction (S)-malate + NAD(+) = pyruvate + CO2 + NADH. The enzyme catalyses oxaloacetate + H(+) = pyruvate + CO2. The protein is NAD-dependent malic enzyme (mae2) of Schizosaccharomyces pombe (strain 972 / ATCC 24843) (Fission yeast).